The following is a 116-amino-acid chain: Aspartate 1-decarboxylase (116 aa).

S25 functions as the Schiff-base intermediate with substrate; via pyruvic acid in the catalytic mechanism. The residue at position 25 (S25) is a Pyruvic acid (Ser). Substrate is bound at residue T57. Catalysis depends on Y58, which acts as the Proton donor. 73–75 (GAA) provides a ligand contact to substrate.

This sequence belongs to the PanD family. As to quaternary structure, heterooctamer of four alpha and four beta subunits. The cofactor is pyruvate. In terms of processing, is synthesized initially as an inactive proenzyme, which is activated by self-cleavage at a specific serine bond to produce a beta-subunit with a hydroxyl group at its C-terminus and an alpha-subunit with a pyruvoyl group at its N-terminus.

It is found in the cytoplasm. It carries out the reaction L-aspartate + H(+) = beta-alanine + CO2. It functions in the pathway cofactor biosynthesis; (R)-pantothenate biosynthesis; beta-alanine from L-aspartate: step 1/1. Functionally, catalyzes the pyruvoyl-dependent decarboxylation of aspartate to produce beta-alanine. The chain is Aspartate 1-decarboxylase from Parabacteroides distasonis (strain ATCC 8503 / DSM 20701 / CIP 104284 / JCM 5825 / NCTC 11152).